The chain runs to 493 residues: GTPase Der (493 aa).

2 EngA-type G domains span residues 3-166 and 206-379; these read PVVA…AEAL and IKLA…KSAT. GTP contacts are provided by residues 9 to 16, 56 to 60, 118 to 121, 212 to 219, 259 to 263, and 324 to 327; these read GRPNVGKS, DTGGI, NKVD, DTAGV, and NKWD. The 85-residue stretch at 380 to 464 folds into the KH-like domain; the sequence is TRVGTSVLTR…PIRIQFQNSE (85 aa).

It belongs to the TRAFAC class TrmE-Era-EngA-EngB-Septin-like GTPase superfamily. EngA (Der) GTPase family. As to quaternary structure, associates with the 50S ribosomal subunit.

Its function is as follows. GTPase that plays an essential role in the late steps of ribosome biogenesis. This Vibrio atlanticus (strain LGP32) (Vibrio splendidus (strain Mel32)) protein is GTPase Der.